The following is a 208-amino-acid chain: Ribosomal RNA small subunit methyltransferase G (208 aa).

Residues Gly-76, Leu-81, 127–128, and Arg-142 contribute to the S-adenosyl-L-methionine site; that span reads VE.

This sequence belongs to the methyltransferase superfamily. RNA methyltransferase RsmG family.

It is found in the cytoplasm. It catalyses the reaction guanosine(527) in 16S rRNA + S-adenosyl-L-methionine = N(7)-methylguanosine(527) in 16S rRNA + S-adenosyl-L-homocysteine. Its function is as follows. Specifically methylates the N7 position of guanine in position 527 of 16S rRNA. In Legionella pneumophila (strain Lens), this protein is Ribosomal RNA small subunit methyltransferase G.